Consider the following 235-residue polypeptide: Germin-like protein 1-4 (235 aa).

An N-terminal signal peptide occupies residues 1–27; that stretch reads MAAKLPTVVLLASFAAVILSLAAPLLA. An intrachain disulfide couples C37 to C55. N60 is a glycosylation site (N-linked (GlcNAc...) asparagine). The Cupin type-1 domain occupies 69–226; that stretch reads PGLGKPADVY…AFQVDGGVVE (158 aa). H120, H122, E127, and H171 together coordinate Mn(2+).

This sequence belongs to the germin family. In terms of assembly, oligomer (believed to be a pentamer but probably hexamer).

The protein resides in the secreted. The protein localises to the extracellular space. Its subcellular location is the apoplast. Its function is as follows. May play a role in plant defense. Probably has no oxalate oxidase activity even if the active site is conserved. The protein is Germin-like protein 1-4 of Oryza sativa subsp. japonica (Rice).